The primary structure comprises 325 residues: UPF0285 protein MmarC5_0962 (325 aa).

This sequence belongs to the UPF0285 family.

The protein is UPF0285 protein MmarC5_0962 of Methanococcus maripaludis (strain C5 / ATCC BAA-1333).